A 457-amino-acid chain; its full sequence is Alkylcitrate synthase phiJ (457 aa).

Active-site residues include histidine 328 and aspartate 384.

The protein belongs to the citrate synthase family.

The enzyme catalyses (2E,10E)-dode-2,10-dicenoyl-CoA + oxaloacetate + H2O = (4E,11E)-2-hydroxytrideca-4,11-dien-1,2,3-tricarboxylate + CoA + H(+). It functions in the pathway secondary metabolite biosynthesis. In terms of biological role, alkylcitrate synthase; part of the gene cluster that mediates the biosynthesis of the antihypercholesterolemic agents phomoidrides which are dimeric anhydrides. Within the pathway, the alkylcitrate synthase (ACS) phiJ and the alkylcitrate dehydratase (ACDH) phiI produce the decarboxylated monomeric anhydrides by coupling the C12-fatty acyl product from phiA with oxalacetic acid. The pathway begins with the highly reducing polyketide synthase phiA that catalyzes the formation of a C12-fatty acyl-ACP, starting from one acetate and 5 malonate units. The hydrolase phiM is involved in the release of the C12-fatty acyl chain from phiA. The alkylcitrate synthase (ACS) phiJ and the alkylcitrate dehydratase (ACDH) phiI then give rise to decarboxylated monomeric anhydrides by coupling the C12-fatty acyl chain with oxalacetic acid. The cyclase phiC is responsible for the dimerization of the monomeric anhydrides which leads to the production of prephomoidride that contains the characteristic bicyclo[4.3.1]deca-1,6-diene system of phomoidrides. Iterative oxidation catalyzed by the alpha-ketoglutarate-dependent dioxygenase phiK produced then phomoidride A. Finally, the methyltransferase phiE converts phomoidride A to phomoidride B via an acetalization reaction. The phosphatidylethanolamine-binding protein phiB and phiN are not essential for dimerization and their functions have still to be determined. The sequence is that of Alkylcitrate synthase phiJ from Fungal sp. (strain ATCC 74256).